We begin with the raw amino-acid sequence, 200 residues long: Kunitz type trypsin inhibitor 111 (200 aa).

Residues 1–24 (MSTISFTIFILANVWLLVVTTSIA) form the signal peptide. Disulfide bonds link cysteine 62-cysteine 108, cysteine 160-cysteine 172, and cysteine 165-cysteine 168.

The protein belongs to the protease inhibitor I3 (leguminous Kunitz-type inhibitor) family. In terms of assembly, interacts with SCP1.

The protein resides in the secreted. It is found in the extracellular space. It localises to the apoplast. The protein is Kunitz type trypsin inhibitor 111 (KPI111) of Medicago truncatula (Barrel medic).